A 2376-amino-acid polypeptide reads, in one-letter code: MAG2-interacting protein 2 (2376 aa).

Forms a complex with MAG2, ZW10/MIP1 and MIP3 on the endoplasmic reticulum.

Its subcellular location is the endoplasmic reticulum membrane. Its function is as follows. Required for proper maturation of seed storage proteins. Forms a complex with MAG2, ZW10/MIP1 and MIP3 on the endoplasmic reticulum that may be responsible for efficient transport of seed storage proteins. The polypeptide is MAG2-interacting protein 2 (Arabidopsis thaliana (Mouse-ear cress)).